The sequence spans 411 residues: Putative competence-damage inducible protein (411 aa).

This sequence belongs to the CinA family.

The chain is Putative competence-damage inducible protein from Caldicellulosiruptor bescii (strain ATCC BAA-1888 / DSM 6725 / KCTC 15123 / Z-1320) (Anaerocellum thermophilum).